Here is an 88-residue protein sequence, read N- to C-terminus: Small ribosomal subunit protein bS20 (88 aa).

The protein belongs to the bacterial ribosomal protein bS20 family.

Functionally, binds directly to 16S ribosomal RNA. In Blochmanniella floridana, this protein is Small ribosomal subunit protein bS20.